Reading from the N-terminus, the 191-residue chain is Clusterin (191 aa).

Asn79, Asn116, Asn142, and Asn162 each carry an N-linked (GlcNAc...) asparagine glycan. At Ser184 the chain carries Phosphoserine.

It belongs to the clusterin family. Antiparallel disulfide-linked heterodimer of an alpha chain and a beta chain. Self-associates and forms higher oligomers. Interacts with a broad range of misfolded proteins, including APP, APOC2 and LYZ. Slightly acidic pH promotes interaction with misfolded proteins. Forms high-molecular weight oligomers upon interaction with misfolded proteins. Interacts with APOA1, LRP2, CLUAP1 and PON1. Interacts with the complement membrane attack complex. Interacts (via alpha chain) with XRCC6. Interacts with SYVN1, COMMD1, BTRC, CUL1 and with ubiquitin and SCF (SKP1-CUL1-F-box protein) E3 ubiquitin-protein ligase complexes. Interacts (via alpha chain) with BAX in stressed cells, where BAX undergoes a conformation change leading to association with the mitochondrial membrane. Does not interact with BAX in unstressed cells. Found in a complex with LTF, CLU, EPPIN and SEMG1. Interacts (immaturely glycosylated pre-secreted form) with HSPA5; this interaction promotes CLU stability and facilitates stress-induced CLU retrotranslocation from the secretory pathway to the mitochondria, thereby reducing stress-induced apoptosis by stabilizing mitochondrial membrane integrity. Interacts with BCL2L1; this interaction releases and activates BAX and promotes cell death. Interacts with TGFBR2 and ACVR1. Interacts (secreted form) with STMN3; this interaction may act as an important modulator during neuronal differentiation. Proteolytically cleaved on its way through the secretory system, probably within the Golgi lumen. Proteolytic cleavage is not necessary for its chaperone activity. All non-secreted forms are not proteolytically cleaved. Chaperone activity of uncleaved forms is dependent on a non-reducing environment. Post-translationally, polyubiquitinated, leading to proteasomal degradation. Under cellular stress, the intracellular level of cleaved form is reduced due to proteasomal degradation. In terms of processing, heavily N-glycosylated. About 30% of the protein mass is comprised of complex N-linked carbohydrate. Endoplasmic reticulum (ER) stress induces changes in glycosylation status and increases level of hypoglycosylated forms. Core carbohydrates are essential for chaperone activity. Non-secreted forms are hypoglycosylated or unglycosylated.

Its subcellular location is the secreted. It localises to the nucleus. The protein localises to the cytoplasm. It is found in the mitochondrion membrane. The protein resides in the cytosol. Its subcellular location is the microsome. It localises to the endoplasmic reticulum. The protein localises to the mitochondrion. It is found in the perinuclear region. The protein resides in the cytoplasmic vesicle. Its subcellular location is the secretory vesicle. It localises to the chromaffin granule. Its function is as follows. Functions as extracellular chaperone that prevents aggregation of non native proteins. Prevents stress-induced aggregation of blood plasma proteins. Inhibits formation of amyloid fibrils by APP, APOC2, B2M, CALCA, CSN3, SNCA and aggregation-prone LYZ variants (in vitro). Does not require ATP. Maintains partially unfolded proteins in a state appropriate for subsequent refolding by other chaperones, such as HSPA8/HSC70. Does not refold proteins by itself. Binding to cell surface receptors triggers internalization of the chaperone-client complex and subsequent lysosomal or proteasomal degradation. When secreted, protects cells against apoptosis and against cytolysis by complement: inhibits assembly of the complement membrane attack complex (MAC) by preventing polymerization of C9 pore component of the MAC complex. Intracellular forms interact with ubiquitin and SCF (SKP1-CUL1-F-box protein) E3 ubiquitin-protein ligase complexes and promote the ubiquitination and subsequent proteasomal degradation of target proteins. Promotes proteasomal degradation of COMMD1 and IKBKB. Modulates NF-kappa-B transcriptional activity. Following stress, promotes apoptosis. Inhibits apoptosis when associated with the mitochondrial membrane by interference with BAX-dependent release of cytochrome c into the cytoplasm. Plays a role in the regulation of cell proliferation. An intracellular form suppresses stress-induced apoptosis by stabilizing mitochondrial membrane integrity through interaction with HSPA5. Secreted form does not affect caspase or BAX-mediated intrinsic apoptosis and TNF-induced NF-kappa-B-activity. Secreted form act as an important modulator during neuronal differentiation through interaction with STMN3. Plays a role in the clearance of immune complexes that arise during cell injury. The protein is Clusterin of Mesocricetus auratus (Golden hamster).